Consider the following 837-residue polypeptide: Translation initiation factor IF-2 (837 aa).

The tract at residues 94–252 (QRSPEEIEAE…NAHGFQSPTG (159 aa)) is disordered. Basic and acidic residues predominate over residues 96-136 (SPEEIEAERKRELDERRAVENAARQKAEEEARVRAEEEARR). Positions 137-171 (QPAAPSAPAEAVAAPAPVAEPVREAAPVVAAAPAA) are enriched in low complexity. Composition is skewed to basic and acidic residues over residues 172–213 (DTRK…EKAP) and 221–230 (TTDEESDGFR). Positions 231–244 (RGGRGKAKLKKRNA) are enriched in basic residues. Residues 337–506 (PRAPVVTVMG…LLQAEVLELT (170 aa)) form the tr-type G domain. Positions 346–353 (GHVDHGKT) are G1. 346 to 353 (GHVDHGKT) contributes to the GTP binding site. A G2 region spans residues 371-375 (GITQH). A G3 region spans residues 392 to 395 (DTPG). GTP contacts are provided by residues 392-396 (DTPGH) and 446-449 (NKID). The G4 stretch occupies residues 446 to 449 (NKID). Residues 482-484 (SAK) form a G5 region.

This sequence belongs to the TRAFAC class translation factor GTPase superfamily. Classic translation factor GTPase family. IF-2 subfamily.

Its subcellular location is the cytoplasm. Functionally, one of the essential components for the initiation of protein synthesis. Protects formylmethionyl-tRNA from spontaneous hydrolysis and promotes its binding to the 30S ribosomal subunits. Also involved in the hydrolysis of GTP during the formation of the 70S ribosomal complex. In Pseudomonas fluorescens (strain Pf0-1), this protein is Translation initiation factor IF-2.